The following is a 145-amino-acid chain: Endosomal/vacuolar adapter protein YPT35 (145 aa).

A PX domain is found at 32-145 (ISDVLVGEHH…STVVREFVLG (114 aa)).

It belongs to the YPT35 family.

Its subcellular location is the endosome membrane. The protein localises to the vacuole membrane. Its function is as follows. Recruits the lipid transfer protein VPS13 to endosomal and vacuolar membranes. The chain is Endosomal/vacuolar adapter protein YPT35 (YPT35) from Meyerozyma guilliermondii (strain ATCC 6260 / CBS 566 / DSM 6381 / JCM 1539 / NBRC 10279 / NRRL Y-324) (Yeast).